The sequence spans 129 residues: uncharacterized protein (129 aa).

Residues 23–101 (KASTSSESCQ…TAATRTTSKK (79 aa)) are disordered. 2 stretches are compositionally biased toward basic and acidic residues: residues 31 to 40 (CQRRGVRDDT) and 67 to 80 (EGDRGPPRRPEKEP).

This is an uncharacterized protein from Ictaluridae (bullhead catfishes).